A 3333-amino-acid polypeptide reads, in one-letter code: Laminin subunit alpha-3 (3333 aa).

Positions 1–35 are cleaved as a signal peptide; it reads MAAAARPRGRALGPVLPPTPLLLLVLRVLPACGAT. Residues 43-298 form the Laminin N-terminal domain; it reads AGLSLHPTYF…SIKDISIGGQ (256 aa). N142 and N242 each carry an N-linked (GlcNAc...) asparagine glycan. A domain V region spans residues 298 to 728; it reads QCVCNGHAEV…NNYYFPDLHH (431 aa). 29 cysteine pairs are disulfide-bonded: C299–C308, C301–C319, C321–C330, C333–C353, C356–C365, C358–C390, C393–C402, C405–C423, C426–C436, C428–C443, C445–C454, C457–C467, C491–C503, C493–C509, C511–C520, C523–C533, C536–C548, C538–C555, C557–C566, C569–C586, C601–C610, C613–C628, C631–C645, C633–C652, C654–C663, C666–C681, C684–C696, C686–C703, and C705–C714. Laminin EGF-like domains are found at residues 299 to 355, 356 to 425, 426 to 469, 491 to 535, 536 to 588, 590 to 630, 631 to 683, and 684 to 728; these read CVCN…ECEA, CNCH…GCIP, CSCD…FCLR, CDCN…ICQA, CWCS…ACDP, GTIN…GCSE, CKCH…GCQG, and CQCD…DLHH. Positions 796 to 1265 are domain IV 1 (domain IV B); sequence TEAVSGHITI…VAFYHKGALP (470 aa). Disulfide bonds link C1266-C1278, C1268-C1285, C1287-C1296, C1299-C1309, C1312-C1319, C1314-C1326, C1328-C1337, C1340-C1353, C1356-C1371, C1358-C1378, C1380-C1389, C1392-C1402, C1405-C1417, C1407-C1424, C1426-C1435, and C1438-C1453. Laminin EGF-like domains lie at 1266-1311, 1312-1355, 1356-1404, and 1405-1455; these read CECH…RCKP, CSCG…GCEG, CNCS…ECVP, and CNCN…GCTS. A domain III B region spans residues 1266–1465; it reads CECHPTGATG…CFCFGVNNQC (200 aa). The region spanning 1476–1653 is the Laminin IV type A domain; the sequence is VDMLGWHLET…SGRIALAVEI (178 aa). Positions 1654–1821 are domain III A; that stretch reads CACPPAYAGD…DSSPAEECDD (168 aa). Intrachain disulfides connect C1687/C1696, C1689/C1703, C1706/C1715, C1718/C1731, C1734/C1746, C1736/C1755, C1757/C1766, and C1769/C1784. 2 consecutive Laminin EGF-like domains span residues 1687 to 1733 and 1734 to 1786; these read CNCN…SCRA and CPCP…SCQP. In terms of domain architecture, Laminin EGF-like 15; truncated spans 1787-1821; that stretch reads CSCNSNGQLGSCHPLTGDCINQEPKDSSPAEECDD. The segment at 1822 to 2389 is domain II and I; that stretch reads CDSCVMTLLN…ARDAASKVAV (568 aa). Coiled-coil stretches lie at residues 1852-1941 and 1987-2169; these read ASAG…KNVI and KHLR…DELV. The short motif at 2278–2280 is the Cell attachment site element; that stretch reads RGD. Residues 2322–2388 adopt a coiled-coil conformation; it reads RTQNEDFKKA…QARDAASKVA (67 aa). Residues N2365, N2502, and N2584 are each glycosylated (N-linked (GlcNAc...) asparagine). Laminin G-like domains follow at residues 2390–2591, 2598–2760, 2767–2927, 2986–3150, and 3157–3330; these read PMRF…VEPC, SDKN…TKKC, VRSA…LGGC, ALQF…VSSC, and KGIY…LNGC. 5 disulfide bridges follow: C2561-C2591, C2737-C2760, C2895-C2927, C3127-C3150, and C3302-C3330.

Laminin is a complex glycoprotein, consisting of three different polypeptide chains (alpha, beta, gamma), which are bound to each other by disulfide bonds into a cross-shaped molecule comprising one long and three short arms with globules at each end. Alpha-3 is a subunit of laminin-5 (laminin-332 or epiligrin/kalinin/nicein), laminin-6 (laminin-311 or K-laminin) and laminin-7 (laminin-321 or KS-laminin). In terms of tissue distribution, skin; respiratory, urinary, and digestive epithelia and in other specialized tissues with prominent secretory or protective functions. Epithelial basement membrane, and epithelial cell tongue that migrates into a wound bed. A differential and focal expression of the subunit alpha-3 is observed in the CNS.

The protein resides in the secreted. It localises to the extracellular space. It is found in the extracellular matrix. The protein localises to the basement membrane. In terms of biological role, binding to cells via a high affinity receptor, laminin is thought to mediate the attachment, migration and organization of cells into tissues during embryonic development by interacting with other extracellular matrix components. Its function is as follows. Laminin-5 is thought to be involved in (1) cell adhesion via integrin alpha-3/beta-1 in focal adhesion and integrin alpha-6/beta-4 in hemidesmosomes, (2) signal transduction via tyrosine phosphorylation of pp125-FAK and p80, (3) differentiation of keratinocytes. This Homo sapiens (Human) protein is Laminin subunit alpha-3 (LAMA3).